Reading from the N-terminus, the 100-residue chain is Gas vesicle protein J (100 aa).

The protein belongs to the gas vesicle GvpA family. In terms of assembly, interacts with GvpA.

The protein localises to the gas vesicle. A minor component of the gas vesicle, might be involved in nucleating gas vesicle formation. This protein could be important for the shape determination of the gas vesicle. Gas vesicles (GV) are hollow, gas filled proteinaceous nanostructures. During planktonic growth they allow positioning of the organism at a favorable depth for light or nutrient acquisition. In terms of biological role, when a minimal gvp locus (gvpA2-gvpR-gvpN-gvpF-gvpG-gvpL-gvpS-gvpK-gvpJ-gvpT-gvpU, called pNL29) is expressed in E.coli gas vesicles are made. The polypeptide is Gas vesicle protein J (Priestia megaterium (Bacillus megaterium)).